Consider the following 2871-residue polypeptide: MRRGRLLEVALGFTVLLASYTSHRAEANLEAGNGKETRASRAKRRGGGGHDALKGPNVCGSRYNAYCCPGWKTLPGGNQCIVPICRHSCGDGFCSRPNMCTCPSGQIAPSCGSRSIQHCNIRCMNGGSCSDDHCLCQKGYIGTHCGQPVCESGCLNGGRCVAPNRCACTYGFTGPQCERDYRTGPCFTVVSNQMCQGQLSGIVCTKTLCCATVGRAWGHPCEMCPAQPHPCRRGFIPNIRTGACQDVDECQAIPGLCQGGNCINTVGSFECKCPAGHKFNEVSQKCEDIDECSTIPGICDGGECTNTVSSYFCKCPPGFYTSPDGTRCIDVRPGYCYTALTNGRCSNQLPQSITKMQCCCDVGRCWSPGVTVTPEMCPIRATEDFNKLCSVPMVVPERPGYPSPPLGPIPPVHPVPPGFPPGPQIPVPRPPVEYPYPSREPPRVLPVNVTDYCQLFRYLCHNGRCIPTPGSYRCECNKGFQLDLRGECIDVDECEKNPCAGGECINNQGSYTCQCRPGYQSTLTRTECRDIDECLQNGRICNNGRCINTDGSFHCVCNAGFHVTRDGKNCEDMDECSIRNMCLNGMCINEDGSFKCICKPGFQLASDGRYCKDINECETSGICMNGRCVNTDGSYRCECFPGLAVGLDGRVCVDTHMRSTCYGGYKRGQCVKPLFGAVTKSECCCASTEYAFGEPCQPCPSQNSAEYQALCSSGPGMTSAGSDINECALDPDICPNGICENLRGTYKCICNSGYEVDSTGKNCVDINECVLNSLLCDNGQCRNTPGSFVCTCPKGFIYKPDLKTCEDIDECESSPCINGVCKNSPGSFICECSSESTLDPTKTICIETIKGTCWQTIIDGRCEININGATLKSQCCSSLGAAWGSPCTPCQVDPICGKGYSRIKGTQCEDIDECEVFPGVCKNGLCVNSKGSFKCQCPNGMTLDATGRICLDIRLETCFLRYEDEECTLPVVGRHRMDACCCSVGAAWGTEECEECPPRNTPEYEELCPRGPGFATKEITNGKPFFKDINECKMIPNLCTHGKCRNTIGSFKCRCDSGFALDSEERNCIDIDECRISPDLCGRGQCVNTPGDFECKCDEGYESGFMMMKNCMDIDECQRDPLLCRGGVCLNTEGSYRCECPSGHQMSPNISACIDINECELSAHLCPHGRCVNLIGKYQRARNPGYHSTPDRLFCVDIDECSIMNGGCETFCTNSEGSYECSCQPGFALMPDQRSCTDIDECEDNPNICDGGQCTNIPGEYRCLCYDGFMASEDMKTCVDVNECDLNPNICLSGTCENTKGSFICHCDMGYSGKKGKTGCTDINECEIGAHNCDRHAVCTNTAGSFNCSCSPGWIGDGIKCTDLDECSNGTHMCSQHADCKNTMGSYRCLCKEGYTGDGFTCADLDECSENVKLCGNVQCLYAPGGYHCEYDMGFVPSADRKSCVDSDECSLPNICVFGTCHNLPGLFRCECEIGYELDRSGGNCTDVNECLEPPTCISGNCVNTPGSYTCVCPPDFELNPTRVGCVDTRSGNCYLDVRPRGDNGDTACSNEIGVGVSKASCCCSLGKAWGTPCEQCPPVNTSEYKILCPGGEGFRPNPITVILEDIDECQELPGLCQGGKCINTFGSFQCRCPTGYYLNEDTRVCDDVNECETPGICGPGTCYNTVGNYTCICPPDYMQVNGGNNCMDMRRSLCYRNYYADNQTCDGELLFNMTKKMCCCSYNIGRAWNKPCEQCPIPSTDEFATLCGSQRPGFVIDIYTGLPVDIDECREIPGVCENGVCINMVGSFRCECPVGFFYNDKLLVCEDIDECQNGPVCQRNAECINTAGSYRCDCKPGYRFTSTGQCNDRNECQEIPNICSHGQCIDTVGSFYCLCHTGFKTNADQTMCLDINECERDACGNGTCRNTIGSFNCRCNHGFILSHNNDCIDVDECATGNGNLCRNGQCINTVGSFQCQCNEGYEVAPDGRTCVDINECLLEPGKCAPGTCQNLDGSYRCICPPGYSLQNDKCEDIDECVEEPEICALGTCSNTEGSFKCLCPDGFSLSSTGRRCQDLRMSYCYAKFEGGKCSSPKSRNHSKQECCCALKGEGWGDPCELCPTEPDEAFRQICPYGSGIIVGPDDSAVDMDECKEPDVCKHGQCINTDGSYRCECPFGYILEGNECVDTDECSVGNPCGNGTCKNVIGGFECTCEEGFEPGPMMTCEDINECAQNPLLCAFRCVNTYGSYECKCPTGYVLREDRRMCKDEDECEEGKHDCAEKQMECKNLIGMYICICGPGYQRRPDGEGCVDENECQTKPGICENGRCLNTRGSYTCECNDGFTASPTQDECLDNREGYCFTEVLQNMCQIGSSNRNPVTKSECCCDGGRGWGPHCEICPFQGTVAFKKLCPHGRGFMTNGADIDECKVIHDVCRNGECINDRGSYHCICKTGYTPDITGTACVDLNECNQAPKPCNFICKNTEGSYQCSCPKGYILQEDGRSCKDLDECATKQHNCQFLCVNTIGSFACKCPPGFTQHHTACIDNNECTSDINLCGAKGICQNTPGSFTCECQRGFSLDQSGASCEDVDECEGNHRCQHGCQNIIGGYRCSCPQGYLQHYQWNQCVDENECLSAHICGGASCHNTLGSYKCMCPAGFQYEQFSGGCQDINECGSSQAPCSYGCSNTEGGYLCGCPPGYFRIGQGHCVSGMGMGRGSPEPPASGEMDDNSLSPEACYECKINGYPKRGRKRRSTNETDAFNIEDQPETESNVSLASWDVEKTAVFAFNISHISNKVRILELLPALTTLTNHNRYLIESGNENGFFKINQKEGISYLHFTKKKPVAGTYSLQISSTPLYKKKELNQLEDKYDKDYLSGELGDNLKMKIQILLH.

A signal peptide spans 1–24 (MRRGRLLEVALGFTVLLASYTSHR). A propeptide spanning residues 25 to 44 (AEANLEAGNGKETRASRAKR) is cleaved from the precursor. Residues 29–39 (LEAGNGKETRA) are compositionally biased toward basic and acidic residues. Positions 29 to 49 (LEAGNGKETRASRAKRRGGGG) are disordered. Residues 45–81 (RGGGGHDALKGPNVCGSRYNAYCCPGWKTLPGGNQCI) are fibrillin unique N-terminal (FUN) domain. Residues 45–450 (RGGGGHDALK…PPRVLPVNVT (406 aa)) are N-terminal domain. 11 disulfides stabilise this stretch: C59–C68, C67–C80, C85–C94, C89–C100, C102–C111, C119–C129, C123–C134, C136–C145, C150–C160, C154–C166, and C168–C177. 3 consecutive EGF-like domains span residues 81 to 112 (IVPICRHSCGDGFCSRPNMCTCPSGQIAPSCG), 115 to 146 (SIQHCNIRCMNGGSCSDDHCLCQKGYIGTHCG), and 147 to 178 (QPVCESGCLNGGRCVAPNRCACTYGFTGPQCE). Residues 119–329 (CNIRCMNGGS…YTSPDGTRCI (211 aa)) form an interaction with MFAP4 region. The TB 1 domain occupies 184–236 (GPCFTVVSNQMCQGQLSGIVCTKTLCCATVGRAWGHPCEMCPAQPHPCRRGFI). The hybrid domain 1 stretch occupies residues 195-221 (CQGQLSGIVCTKTLCCATVGRAWGHPC). Residues 246 to 287 (DVDECQAIPGLCQGGNCINTVGSFECKCPAGHKFNEVSQKCE) form the EGF-like 4; calcium-binding domain. 6 disulfides stabilise this stretch: C250–C262, C257–C271, C273–C286, C292–C304, C299–C313, and C315–C328. O-linked (Glc) serine glycosylation is present at S268. Residues 288–329 (DIDECSTIPGICDGGECTNTVSSYFCKCPPGFYTSPDGTRCI) form the EGF-like 5; calcium-binding domain. Positions 334 to 389 (GYCYTALTNGRCSNQLPQSITKMQCCCDVGRCWSPGVTVTPEMCPIRATEDFNKLC) constitute a TB 2 domain. N-linked (GlcNAc...) asparagine glycosylation occurs at N448. Residues 449-489 (VTDYCQLFRYLCHNGRCIPTPGSYRCECNKGFQLDLRGECI) form the EGF-like 6 domain. 15 disulfide bridges follow: C453/C465, C460/C474, C476/C488, C494/C504, C499/C513, C515/C528, C534/C546, C541/C555, C557/C570, C576/C587, C582/C596, C598/C611, C617/C628, C623/C637, and C639/C652. O-linked (Glc) serine glycosylation occurs at S471. In terms of domain architecture, EGF-like 7; calcium-binding spans 490–529 (DVDECEKNPCAGGECINNQGSYTCQCRPGYQSTLTRTECR). Residue S510 is glycosylated (O-linked (Glc) serine). The EGF-like 8; calcium-binding domain occupies 530–571 (DIDECLQNGRICNNGRCINTDGSFHCVCNAGFHVTRDGKNCE). The EGF-like 9; calcium-binding domain occupies 572–612 (DMDECSIRNMCLNGMCINEDGSFKCICKPGFQLASDGRYCK). The EGF-like 10; calcium-binding domain maps to 613–653 (DINECETSGICMNGRCVNTDGSYRCECFPGLAVGLDGRVCV). The 53-residue stretch at 659 to 711 (STCYGGYKRGQCVKPLFGAVTKSECCCASTEYAFGEPCQPCPSQNSAEYQALC) folds into the TB 3 domain. The EGF-like 11; calcium-binding domain maps to 723-764 (DINECALDPDICPNGICENLRGTYKCICNSGYEVDSTGKNCV). 16 disulfide bridges follow: C727/C739, C734/C748, C750/C763, C769/C781, C776/C790, C792/C805, C811/C821, C816/C830, C832/C845, C853/C875, C862/C887, C876/C890, C896/C908, C914/C926, C921/C935, and C937/C950. The EGF-like 12; calcium-binding domain occupies 765–806 (DINECVLNSLLCDNGQCRNTPGSFVCTCPKGFIYKPDLKTCE). Residues 807-846 (DIDECESSPCINGVCKNSPGSFICECSSESTLDPTKTICI) form the EGF-like 13; calcium-binding domain. The 52-residue stretch at 851–902 (GTCWQTIIDGRCEININGATLKSQCCSSLGAAWGSPCTPCQVDPICGKGYSR) folds into the TB 4 domain. Residues 862 to 887 (CEININGATLKSQCCSSLGAAWGSPC) are hybrid domain 2. In terms of domain architecture, EGF-like 14; calcium-binding spans 910–951 (DIDECEVFPGVCKNGLCVNSKGSFKCQCPNGMTLDATGRICL). One can recognise a TB 5 domain in the interval 956 to 1008 (ETCFLRYEDEECTLPVVGRHRMDACCCSVGAAWGTEECEECPPRNTPEYEELC). Positions 1028–1069 (DINECKMIPNLCTHGKCRNTIGSFKCRCDSGFALDSEERNCI) constitute an EGF-like 15; calcium-binding domain. 43 disulfide bridges follow: C1032/C1044, C1039/C1053, C1055/C1068, C1074/C1086, C1081/C1095, C1097/C1111, C1117/C1129, C1124/C1138, C1140/C1153, C1159/C1171, C1201/C1212, C1208/C1221, C1223/C1236, C1242/C1254, C1249/C1263, C1265/C1278, C1284/C1296, C1291/C1305, C1307/C1320, C1326/C1339, C1333/C1348, C1350/C1361, C1367/C1380, C1374/C1389, C1391/C1402, C1408/C1420, C1415/C1429, C1450/C1461, C1456/C1470, C1472/C1485, C1491/C1502, C1497/C1511, C1513/C1526, C1534/C1562, C1549/C1574, C1563/C1577, C1564/C1589, C1610/C1622, C1617/C1631, C1633/C1646, C1652/C1663, C1658/C1672, and C1674/C1687. Residues 1070–1112 (DIDECRISPDLCGRGQCVNTPGDFECKCDEGYESGFMMMKNCM) enclose the EGF-like 16; calcium-binding domain. The region spanning 1113–1154 (DIDECQRDPLLCRGGVCLNTEGSYRCECPSGHQMSPNISACI) is the EGF-like 17; calcium-binding domain. S1135 carries an O-linked (Glc) serine glycan. N1149 carries N-linked (GlcNAc...) asparagine glycosylation. The region spanning 1155–1196 (DINECELSAHLCPHGRCVNLIGKYQRARNPGYHSTPDRLFCV) is the EGF-like 18; calcium-binding domain. In terms of domain architecture, EGF-like 19; calcium-binding spans 1197–1237 (DIDECSIMNGGCETFCTNSEGSYECSCQPGFALMPDQRSCT). Residue S1218 is glycosylated (O-linked (Glc) serine). Residues 1238-1279 (DIDECEDNPNICDGGQCTNIPGEYRCLCYDGFMASEDMKTCV) form the EGF-like 20; calcium-binding domain. Residues 1280 to 1321 (DVNECDLNPNICLSGTCENTKGSFICHCDMGYSGKKGKTGCT) enclose the EGF-like 21; calcium-binding domain. S1302 carries O-linked (Glc) serine glycosylation. The region spanning 1322-1362 (DINECEIGAHNCDRHAVCTNTAGSFNCSCSPGWIGDGIKCT) is the EGF-like 22; calcium-binding domain. S1345 carries an O-linked (Glc) serine glycan. Residue N1347 is glycosylated (N-linked (GlcNAc...) asparagine). One can recognise an EGF-like 23; calcium-binding domain in the interval 1363–1403 (DLDECSNGTHMCSQHADCKNTMGSYRCLCKEGYTGDGFTCA). A glycan (N-linked (GlcNAc...) asparagine) is linked at N1369. S1386 carries an O-linked (Glc) serine glycan. The region spanning 1404–1445 (DLDECSENVKLCGNVQCLYAPGGYHCEYDMGFVPSADRKSCV) is the EGF-like 24; calcium-binding domain. The EGF-like 25; calcium-binding domain maps to 1446–1486 (DSDECSLPNICVFGTCHNLPGLFRCECEIGYELDRSGGNCT). An N-linked (GlcNAc...) asparagine glycan is attached at N1484. The region spanning 1487–1527 (DVNECLEPPTCISGNCVNTPGSYTCVCPPDFELNPTRVGCV) is the EGF-like 26; calcium-binding domain. S1508 carries O-linked (Glc) serine glycosylation. The segment at 1528-2731 (DTRSGNCYLD…GYPKRGRKRR (1204 aa)) is C-terminal domain. The TB 6 domain maps to 1532–1589 (GNCYLDVRPRGDNGDTACSNEIGVGVSKASCCCSLGKAWGTPCEQCPPVNTSEYKILC). Positions 1541–1543 (RGD) match the Cell attachment site motif. N1581 carries an N-linked (GlcNAc...) asparagine glycan. The region spanning 1606-1647 (DIDECQELPGLCQGGKCINTFGSFQCRCPTGYYLNEDTRVCD) is the EGF-like 27; calcium-binding domain. A glycan (O-linked (Glc) serine) is linked at S1628. The region spanning 1648-1688 (DVNECETPGICGPGTCYNTVGNYTCICPPDYMQVNGGNNCM) is the EGF-like 28; calcium-binding domain. N1669 carries an N-linked (GlcNAc...) asparagine glycan. The region spanning 1693 to 1748 (SLCYRNYYADNQTCDGELLFNMTKKMCCCSYNIGRAWNKPCEQCPIPSTDEFATLC) is the TB 7 domain. N-linked (GlcNAc...) asparagine glycosylation is found at N1703 and N1713. In terms of domain architecture, EGF-like 29; calcium-binding spans 1766–1807 (DIDECREIPGVCENGVCINMVGSFRCECPVGFFYNDKLLVCE). 40 disulfide bridges follow: C1770-C1782, C1777-C1791, C1793-C1806, C1812-C1824, C1818-C1833, C1835-C1847, C1853-C1865, C1860-C1874, C1876-C1889, C1895-C1905, C1900-C1914, C1916-C1928, C1934-C1947, C1942-C1956, C1958-C1971, C1977-C1989, C1984-C1998, C2000-C2011, C2017-C2029, C2024-C2038, C2040-C2053, C2061-C2083, C2070-C2096, C2084-C2099, C2085-C2111, C2131-C2142, C2137-C2151, C2153-C2164, C2170-C2181, C2176-C2190, C2192-C2204, C2210-C2221, C2217-C2230, C2232-C2245, C2251-C2265, C2258-C2274, C2276-C2289, C2295-C2307, C2302-C2316, and C2318-C2331. Positions 1808–1848 (DIDECQNGPVCQRNAECINTAGSYRCDCKPGYRFTSTGQCN) constitute an EGF-like 30; calcium-binding domain. O-linked (Glc) serine glycosylation occurs at S1830. The region spanning 1849–1890 (DRNECQEIPNICSHGQCIDTVGSFYCLCHTGFKTNADQTMCL) is the EGF-like 31; calcium-binding domain. S1871 carries an O-linked (Glc) serine glycan. One can recognise an EGF-like 32; calcium-binding domain in the interval 1891–1929 (DINECERDACGNGTCRNTIGSFNCRCNHGFILSHNNDCI). An N-linked (GlcNAc...) asparagine glycan is attached at N1902. The O-linked (Glc) serine glycan is linked to S1911. An EGF-like 33; calcium-binding domain is found at 1930–1972 (DVDECATGNGNLCRNGQCINTVGSFQCQCNEGYEVAPDGRTCV). A glycan (O-linked (Glc) serine) is linked at S1953. The region spanning 1973–2012 (DINECLLEPGKCAPGTCQNLDGSYRCICPPGYSLQNDKCE) is the EGF-like 34; calcium-binding domain. Residues 2013–2054 (DIDECVEEPEICALGTCSNTEGSFKCLCPDGFSLSSTGRRCQ) form the EGF-like 35; calcium-binding domain. Residue S2035 is glycosylated (O-linked (Glc) serine). The TB 8 domain occupies 2059–2111 (SYCYAKFEGGKCSSPKSRNHSKQECCCALKGEGWGDPCELCPTEPDEAFRQIC). The N-linked (GlcNAc...) asparagine glycan is linked to N2077. The EGF-like 36; calcium-binding domain maps to 2127–2165 (DMDECKEPDVCKHGQCINTDGSYRCECPFGYILEGNECV). The O-linked (Glc) serine glycan is linked to S2148. The region spanning 2166 to 2205 (DTDECSVGNPCGNGTCKNVIGGFECTCEEGFEPGPMMTCE) is the EGF-like 37; calcium-binding domain. N-linked (GlcNAc...) asparagine glycosylation is present at N2178. The region spanning 2206–2246 (DINECAQNPLLCAFRCVNTYGSYECKCPTGYVLREDRRMCK) is the EGF-like 38; calcium-binding domain. O-linked (Glc) serine glycosylation occurs at S2227. An EGF-like 39; calcium-binding domain is found at 2247–2290 (DEDECEEGKHDCAEKQMECKNLIGMYICICGPGYQRRPDGEGCV). The region spanning 2291–2332 (DENECQTKPGICENGRCLNTRGSYTCECNDGFTASPTQDECL) is the EGF-like 40; calcium-binding domain. O-linked (Glc) serine glycosylation occurs at S2313. The TB 9 domain maps to 2337–2390 (GYCFTEVLQNMCQIGSSNRNPVTKSECCCDGGRGWGPHCEICPFQGTVAFKKLC). The EGF-like 41; calcium-binding domain maps to 2402–2443 (DIDECKVIHDVCRNGECINDRGSYHCICKTGYTPDITGTACV). Intrachain disulfides connect C2406–C2418, C2413–C2427, C2429–C2442, C2448–C2459, C2455–C2468, C2470–C2483, C2489–C2500, C2496–C2509, C2511–C2522, C2528–C2541, C2535–C2550, C2552–C2565, C2571–C2581, C2577–C2590, C2592–C2605, C2611–C2622, C2617–C2631, C2633–C2646, C2652–C2663, C2659–C2672, and C2674–C2686. The EGF-like 42; calcium-binding domain maps to 2444–2484 (DLNECNQAPKPCNFICKNTEGSYQCSCPKGYILQEDGRSCK). S2465 is a glycosylation site (O-linked (Glc) serine). The 39-residue stretch at 2485–2523 (DLDECATKQHNCQFLCVNTIGSFACKCPPGFTQHHTACI) folds into the EGF-like 43; calcium-binding domain. The EGF-like 44; calcium-binding domain maps to 2524-2566 (DNNECTSDINLCGAKGICQNTPGSFTCECQRGFSLDQSGASCE). The O-linked (Glc) serine glycan is linked to S2547. Residues 2567–2606 (DVDECEGNHRCQHGCQNIIGGYRCSCPQGYLQHYQWNQCV) form the EGF-like 45; calcium-binding domain. The region spanning 2607-2647 (DENECLSAHICGGASCHNTLGSYKCMCPAGFQYEQFSGGCQ) is the EGF-like 46; calcium-binding domain. O-linked (Glc) serine glycosylation is present at S2628. The 40-residue stretch at 2648 to 2687 (DINECGSSQAPCSYGCSNTEGGYLCGCPPGYFRIGQGHCV) folds into the EGF-like 47; calcium-binding domain. Phosphoserine is present on residues S2702 and S2709. N-linked (GlcNAc...) asparagine glycans are attached at residues N2734, N2750, and N2767.

This sequence belongs to the fibrillin family. In terms of assembly, interacts with COL16A1. Interacts with integrin alpha-V/beta-3. Interacts with ADAMTS10; this interaction promotes microfibril assembly. Interacts with THSD4; this interaction promotes fibril formation. Interacts (via N-terminal domain) with FBLN2 and FBLN5. Interacts with ELN. Forms a ternary complex with ELN and FBLN2 or FBLN5 and a significant interaction with ELN seen only in the presence of FBLN2 or FBLN5. Interacts (via N-terminal domain) with LTBP2 (via C-terminal domain) in a Ca(+2)-dependent manner. Interacts (via N-terminal domain) with LTBP1 (via C-terminal domain). Interacts with integrins ITGA5:ITGB1, ITGAV:ITGB3 and ITGAV:ITGB6. Interacts (via N-terminal domain) with BMP2, BMP4, BMP7, BMP10 and GDF5. Interacts (via N-terminal domain) with MFAP2 and MFAP5. Interacts with ADAMTSL5. Interacts with MFAP4. Interacts (via N-terminal domain) with TNFSF11 in a Ca(+2)-dependent manner. Interacts (via N-terminal domain) with EFEMP2; this interaction inhibits EFEMP2 binding to LOX and ELN. Cleavage of N- and C-terminus by furin is required for incorporation into the extracellular matrix and assembly into microfibrils. The C-terminus, which corresponds to the Asprosin chain, was initially thought to constitute a propeptide. Fibrillin-1 and Asprosin chains are still linked together during the secretion from cells, but are subsequently separated by furin, an essential step for incorporation of Fibrillin-1 into the nascent microfibrils. Post-translationally, forms intermolecular disulfide bonds either with other fibrillin-1 molecules or with other components of the microfibrils. In terms of processing, O-glycosylated on serine residues by POGLUT2 and POGLUT3 which is necessary for efficient protein secretion.

Its subcellular location is the secreted. The protein localises to the extracellular space. The protein resides in the extracellular matrix. Functionally, structural component of the 10-12 nm diameter microfibrils of the extracellular matrix, which conveys both structural and regulatory properties to load-bearing connective tissues. Fibrillin-1-containing microfibrils provide long-term force bearing structural support. In tissues such as the lung, blood vessels and skin, microfibrils form the periphery of the elastic fiber, acting as a scaffold for the deposition of elastin. In addition, microfibrils can occur as elastin-independent networks in tissues such as the ciliary zonule, tendon, cornea and glomerulus where they provide tensile strength and have anchoring roles. Fibrillin-1 also plays a key role in tissue homeostasis through specific interactions with growth factors, such as the bone morphogenetic proteins (BMPs), growth and differentiation factors (GDFs) and latent transforming growth factor-beta-binding proteins (LTBPs), cell-surface integrins and other extracellular matrix protein and proteoglycan components. Regulates osteoblast maturation by controlling TGF-beta bioavailability and calibrating TGF-beta and BMP levels, respectively. Negatively regulates osteoclastogenesis by binding and sequestering an osteoclast differentiation and activation factor TNFSF11. This leads to disruption of TNFSF11-induced Ca(2+) signaling and impairment of TNFSF11-mediated nuclear translocation and activation of transcription factor NFATC1 which regulates genes important for osteoclast differentiation and function. Mediates cell adhesion via its binding to cell surface receptors integrins ITGAV:ITGB3 and ITGA5:ITGB1. Binds heparin and this interaction plays an important role in the assembly of microfibrils. In terms of biological role, hormone that targets the liver to increase plasma glucose levels. Secreted by white adipose tissue and circulates in the plasma. Acts in response to fasting and promotes blood glucose elevation by binding to the surface of hepatocytes. Promotes hepatocyte glucose release by activating the protein kinase A activity in the liver, resulting in rapid glucose release into the circulation. This is Fibrillin-1 from Sus scrofa (Pig).